The sequence spans 843 residues: Neuroligin-1 (843 aa).

The first 45 residues, 1 to 45, serve as a signal peptide directing secretion; that stretch reads MALPRCMWPNYVWRAMMACVVHRGSGAPLTLCLLGCLLQTFHVLS. At 46 to 697 the chain is on the extracellular side; sequence QKLDDVDPLV…DQRDYSTELS (652 aa). Asn-109 carries N-linked (GlcNAc...) (complex) asparagine glycosylation. Cys-117 and Cys-153 are joined by a disulfide. A disordered region spans residues 167–190; sequence LTKKHTDDLGDNDGAEDEDIRDSG. The segment covering 175–186 has biased composition (acidic residues); it reads LGDNDGAEDEDI. N-linked (GlcNAc...) (complex) asparagine glycosylation is found at Asn-303 and Asn-343. Intrachain disulfides connect Cys-342-Cys-353 and Cys-512-Cys-546. Asn-547 is a glycosylation site (N-linked (GlcNAc...) asparagine). Residues 647–688 form a disordered region; that stretch reads TKVPSTDITLRPTRKNSTPVTSAFPTAKQDDPKQQPSPFSVD. The span at 661–670 shows a compositional bias: polar residues; that stretch reads KNSTPVTSAF. O-linked (GalNAc...) serine glycosylation is found at Ser-683 and Ser-686. The chain crosses the membrane as a helical span at residues 698–718; that stretch reads VTIAVGASLLFLNILAFAALY. The Cytoplasmic segment spans residues 719-843; it reads YKKDKRRHDV…HPHSHSTTRV (125 aa). The disordered stretch occupies residues 822–843; sequence GGQNNTLPHPHPHPHSHSTTRV. The segment covering 831–843 has biased composition (basic residues); the sequence is PHPHPHSHSTTRV.

The protein belongs to the type-B carboxylesterase/lipase family. In terms of assembly, interacts with neurexins NRXN1, NRXN2 and NRXN3. Interaction with neurexins is mediated by heparan sulfate glycan modification on neurexin. Interacts (via its C-terminus) with DLG4/PSD-95 (via PDZ domain 3). Interacts with AIP1, GOPC and PDZRN3. Interacts with NLGN3. As to expression, brain and arteries (at protein level). Expressed in olfactory bulb. Detected in brain.

It localises to the cell membrane. It is found in the postsynaptic density. The protein localises to the synaptic cleft. The protein resides in the synaptic cell membrane. In terms of biological role, cell surface protein involved in cell-cell-interactions via its interactions with neurexin family members. Plays a role in synapse function and synaptic signal transmission, and probably mediates its effects by recruiting and clustering other synaptic proteins. May promote the initial formation of synapses, but is not essential for this. In vitro, triggers the de novo formation of presynaptic structures. May be involved in specification of excitatory synapses. Required to maintain wakefulness quality and normal synchrony of cerebral cortex activity during wakefulness and sleep. The protein is involved in nervous system development. The sequence is that of Neuroligin-1 (Nlgn1) from Mus musculus (Mouse).